Consider the following 737-residue polypeptide: Zinc finger protein 280C (737 aa).

Residues K5, K10, K14, K33, and K55 each participate in a glycyl lysine isopeptide (Lys-Gly) (interchain with G-Cter in SUMO2) cross-link. Over residues 57-66 (AISNILNRGH) the composition is skewed to polar residues. Residues 57 to 137 (AISNILNRGH…DFTKNSQVGS (81 aa)) are disordered. Residue K75 forms a Glycyl lysine isopeptide (Lys-Gly) (interchain with G-Cter in SUMO2) linkage. S80 is subject to Phosphoserine. Polar residues predominate over residues 112-123 (SKSSQSSVTVEN). Residues K113, K126, K167, K174, K180, and K187 each participate in a glycyl lysine isopeptide (Lys-Gly) (interchain with G-Cter in SUMO2) cross-link. Positions 176–185 (PSTSKVNSVT) are enriched in polar residues. The disordered stretch occupies residues 176 to 223 (PSTSKVNSVTPKKPKTSEDVPQINPSTSLPLIGSPPVTSSQVMLSKGT). Over residues 211-223 (PVTSSQVMLSKGT) the composition is skewed to polar residues. T223 is subject to Phosphothreonine. S227 carries the phosphoserine modification. K273 is covalently cross-linked (Glycyl lysine isopeptide (Lys-Gly) (interchain with G-Cter in SUMO2)). 5 consecutive C2H2-type zinc fingers follow at residues 316 to 338 (FKCFSCSKVLKNNIRFMNHMKHH), 353 to 376 (TTCQHCYRQYPTPFQLQCHIESTH), 383 to 406 (TICKICELSFETEHILLQHMKDTH), 413 to 436 (YVCQVCQFRSSTFSDVEAHFRAAH), and 470 to 492 (HRCPKCRLQFLTSKEKAEHKAQH). K522 participates in a covalent cross-link: Glycyl lysine isopeptide (Lys-Gly) (interchain with G-Cter in SUMO2). A compositionally biased stretch (polar residues) spans 535–579 (SFLQVTPPTSQNTTARNPRKSNASRSKTSKLHATTSTASKVNTSK). Positions 535 to 602 (SFLQVTPPTS…YKQKRQRNRK (68 aa)) are disordered. T540 is subject to Phosphothreonine. Residues K564 and K574 each participate in a glycyl lysine isopeptide (Lys-Gly) (interchain with G-Cter in SUMO2) cross-link. Over residues 580 to 602 (PRGRIAKSKAKPSYKQKRQRNRK) the composition is skewed to basic residues.

It localises to the nucleus. Functionally, may function as a transcription factor. The chain is Zinc finger protein 280C (ZNF280C) from Homo sapiens (Human).